The primary structure comprises 198 residues: Ribonuclease HII (198 aa).

In terms of domain architecture, RNase H type-2 spans 10–198 (QLVAGVDEVG…PVKRALGLAS (189 aa)). A divalent metal cation is bound by residues D16, E17, and D108.

Belongs to the RNase HII family. Requires Mn(2+) as cofactor. Mg(2+) serves as cofactor.

The protein localises to the cytoplasm. It carries out the reaction Endonucleolytic cleavage to 5'-phosphomonoester.. Its function is as follows. Endonuclease that specifically degrades the RNA of RNA-DNA hybrids. The protein is Ribonuclease HII of Escherichia coli O45:K1 (strain S88 / ExPEC).